A 212-amino-acid polypeptide reads, in one-letter code: MDKFVRLEGLVAPLDRSNVDTDAIIPKQFLKSIKRSGFGPNAFDEWRYMDVGQPGQDNTGRPKNPNFVLNQPRYQGAEVLLTRANFGCGSSREHAPWALLDFGFKAIIAESFADIFFNNCFKNGILPIVLPAAEIEALFQQVEATPGYKLVVDLSAQAVVRPDGHGIPFQIDAFRKECLLNGWDDIGLTLRHAEKIREFEAKRRVDQPWLFS.

The protein belongs to the LeuD family. LeuD type 1 subfamily. Heterodimer of LeuC and LeuD.

The enzyme catalyses (2R,3S)-3-isopropylmalate = (2S)-2-isopropylmalate. The protein operates within amino-acid biosynthesis; L-leucine biosynthesis; L-leucine from 3-methyl-2-oxobutanoate: step 2/4. Its function is as follows. Catalyzes the isomerization between 2-isopropylmalate and 3-isopropylmalate, via the formation of 2-isopropylmaleate. In Dechloromonas aromatica (strain RCB), this protein is 3-isopropylmalate dehydratase small subunit.